The following is a 136-amino-acid chain: Small ribosomal subunit protein uS8c (136 aa).

Belongs to the universal ribosomal protein uS8 family. In terms of assembly, part of the 30S ribosomal subunit.

It is found in the plastid. The protein resides in the chloroplast. Functionally, one of the primary rRNA binding proteins, it binds directly to 16S rRNA central domain where it helps coordinate assembly of the platform of the 30S subunit. The sequence is that of Small ribosomal subunit protein uS8c (rps8) from Oryza sativa subsp. indica (Rice).